A 370-amino-acid chain; its full sequence is Cytochrome b (370 aa).

Transmembrane regions (helical) follow at residues 25-45, 69-90, 105-125, and 170-190; these read FGSM…FLAI, WIMQ…YIHI, WLSG…GYVL, and FFAL…IHII. Residues His-75 and His-89 each coordinate heme b. His-174 and His-188 together coordinate heme b. His-193 is a binding site for a ubiquinone. The next 4 helical transmembrane spans lie at 218 to 238, 280 to 300, 312 to 332, and 339 to 358; these read YKDM…MSFT, LGGT…PFTH, LTQI…WTAT, and FISI…IINP.

The protein belongs to the cytochrome b family. The cytochrome bc1 complex contains 3 respiratory subunits (MT-CYB, CYC1 and UQCRFS1), 2 core proteins (UQCRC1 and UQCRC2) and probably 6 low-molecular weight proteins. It depends on heme b as a cofactor.

It localises to the mitochondrion inner membrane. Functionally, component of the ubiquinol-cytochrome c reductase complex (complex III or cytochrome b-c1 complex) that is part of the mitochondrial respiratory chain. The b-c1 complex mediates electron transfer from ubiquinol to cytochrome c. Contributes to the generation of a proton gradient across the mitochondrial membrane that is then used for ATP synthesis. The protein is Cytochrome b (MT-CYB) of Bungarus fasciatus (Banded krait).